The primary structure comprises 170 residues: RNA pyrophosphohydrolase (170 aa).

One can recognise a Nudix hydrolase domain in the interval Pro-8 to Lys-158. The Nudix box signature appears at Gly-46 to Ser-67.

It belongs to the Nudix hydrolase family. RppH subfamily. Requires a divalent metal cation as cofactor.

Its function is as follows. Accelerates the degradation of transcripts by removing pyrophosphate from the 5'-end of triphosphorylated RNA, leading to a more labile monophosphorylated state that can stimulate subsequent ribonuclease cleavage. The sequence is that of RNA pyrophosphohydrolase from Nitrobacter winogradskyi (strain ATCC 25391 / DSM 10237 / CIP 104748 / NCIMB 11846 / Nb-255).